A 303-amino-acid polypeptide reads, in one-letter code: Deoxyhypusine hydroxylase (303 aa).

Met-1 is modified (N-acetylmethionine). HEAT-like PBS-type repeat units lie at residues 23-49 (ARFRALFTLRGLGGPVAISWISRAFDD), 54-80 (LKHELAYCLGQMQDRRAIPVLLDVLRD), 87-113 (VRHEAGEALGAIGDPEVLEILKQYSTD), 175-201 (DRYRAMFALRDAGGKEAALALAEGLRC), 206-232 (FRHEIGYVLGQMQHEAAVPQLAAALAQ), and 239-265 (VRHECAEALGAIARPACLAALRAHVAD). Fe cation is bound by residues His-56, His-89, and Glu-90. Fe cation is bound by residues His-208, His-241, and Glu-242.

Belongs to the deoxyhypusine hydroxylase family. Fe(2+) is required as a cofactor.

The catalysed reaction is [eIF5A protein]-deoxyhypusine + AH2 + O2 = [eIF5A protein]-hypusine + A + H2O. It functions in the pathway protein modification; eIF5A hypusination. In terms of biological role, catalyzes the hydroxylation of the N(6)-(4-aminobutyl)-L-lysine intermediate produced by deoxyhypusine synthase/DHPS on a critical lysine of the eukaryotic translation initiation factor 5A/eIF-5A. This is the second step of the post-translational modification of that lysine into an unusual amino acid residue named hypusine. Hypusination is unique to mature eIF-5A factor and is essential for its function. This is Deoxyhypusine hydroxylase from Bos taurus (Bovine).